Reading from the N-terminus, the 563-residue chain is ATP-dependent RNA helicase DeaD (563 aa).

The Q motif signature appears at 13–41; it reads ATFADLQIHPRVLRAIGDVGYESPTAIQA. A Helicase ATP-binding domain is found at 44–215; it reads IPALMAGSDV…AKYLHDPFEV (172 aa). Residue 57–64 participates in ATP binding; sequence AQTGTGKT. A DEAD box motif is present at residues 163–166; sequence DEAD. The region spanning 226–385 is the Helicase C-terminal domain; the sequence is NISQSYIQVA…AQLPTVEDVN (160 aa). 2 disordered regions span residues 441 to 470 and 543 to 563; these read LMAPDPPLSRRNRDQRRDRPQRPKRRPDLT and YRPPDAARRHNGGKPRRKHVG. A compositionally biased stretch (basic and acidic residues) spans 451-461; that stretch reads RNRDQRRDRPQ. Residues 551 to 563 show a composition bias toward basic residues; sequence RHNGGKPRRKHVG.

This sequence belongs to the DEAD box helicase family. DeaD/CsdA subfamily.

The protein resides in the cytoplasm. The enzyme catalyses ATP + H2O = ADP + phosphate + H(+). Functionally, DEAD-box RNA helicase involved in various cellular processes at low temperature, including ribosome biogenesis, mRNA degradation and translation initiation. In Mycobacterium tuberculosis (strain CDC 1551 / Oshkosh), this protein is ATP-dependent RNA helicase DeaD.